A 418-amino-acid polypeptide reads, in one-letter code: Tyrosine--tRNA ligase (418 aa).

Y34 contacts L-tyrosine. The 'HIGH' region signature appears at 39 to 48; the sequence is PTADSLHLGH. The L-tyrosine site is built by Y169 and Q173. The 'KMSKS' region signature appears at 229-233; that stretch reads KFGKS. Residue K232 coordinates ATP. One can recognise an S4 RNA-binding domain in the interval 352-418; it reads LNLVDMLVTA…GKKKYAVLTY (67 aa).

The protein belongs to the class-I aminoacyl-tRNA synthetase family. TyrS type 1 subfamily. Homodimer.

The protein localises to the cytoplasm. It carries out the reaction tRNA(Tyr) + L-tyrosine + ATP = L-tyrosyl-tRNA(Tyr) + AMP + diphosphate + H(+). In terms of biological role, catalyzes the attachment of tyrosine to tRNA(Tyr) in a two-step reaction: tyrosine is first activated by ATP to form Tyr-AMP and then transferred to the acceptor end of tRNA(Tyr). The polypeptide is Tyrosine--tRNA ligase (Streptococcus pyogenes serotype M6 (strain ATCC BAA-946 / MGAS10394)).